We begin with the raw amino-acid sequence, 590 residues long: Aspartate--tRNA(Asp/Asn) ligase (590 aa).

Glu175 lines the L-aspartate pocket. Residues 199 to 202 (QQYK) form an aspartate region. Arg221 and His450 together coordinate L-aspartate. Residue 221–223 (RDE) participates in ATP binding. Glu484 provides a ligand contact to ATP. Residue Arg491 participates in L-aspartate binding. 536–539 (GVDR) lines the ATP pocket.

It belongs to the class-II aminoacyl-tRNA synthetase family. Type 1 subfamily. Homodimer.

The protein localises to the cytoplasm. The catalysed reaction is tRNA(Asx) + L-aspartate + ATP = L-aspartyl-tRNA(Asx) + AMP + diphosphate. Functionally, aspartyl-tRNA synthetase with relaxed tRNA specificity since it is able to aspartylate not only its cognate tRNA(Asp) but also tRNA(Asn). Reaction proceeds in two steps: L-aspartate is first activated by ATP to form Asp-AMP and then transferred to the acceptor end of tRNA(Asp/Asn). The chain is Aspartate--tRNA(Asp/Asn) ligase from Rhodopseudomonas palustris (strain BisA53).